We begin with the raw amino-acid sequence, 1011 residues long: CRM-domain containing factor CFM2, chloroplastic (1011 aa).

The transit peptide at 1–45 (MLLPLFHQQPLILAKTFPDRIFPPFLVPNTLVSRRNVSRANSGIF) directs the protein to the chloroplast. Residues 77–90 (HDSPTRRITGEESG) show a composition bias toward basic and acidic residues. The interval 77 to 96 (HDSPTRRITGEESGKNSPGE) is disordered. CRM domains are found at residues 164-260 (LTLP…YFVS), 376-473 (PKLT…AVSS), and 577-677 (EGIT…QCLR). Disordered stretches follow at residues 721–810 (DSAT…GNSL) and 841–872 (LNANRKLPGSSTGSGSQISALRERKSENDGLV). Residues 722–736 (SATNETWSDGESSNM) show a composition bias toward polar residues. The span at 743–757 (ENQHTEPEKAREKIE) shows a compositional bias: basic and acidic residues. The span at 762–771 (SDLSVPSSGE) shows a compositional bias: polar residues. Acidic residues predominate over residues 772–782 (ENWEDDSEGEV). The segment covering 849–859 (GSSTGSGSQIS) has biased composition (polar residues). Positions 873 to 972 (TDLSNRERLI…WGAEEEMKSF (100 aa)) constitute a CRM 4 domain.

In terms of assembly, interacts with RNA. Part of large ribonucleo-protein particles that contain CAF1 and/or CAF2.

It is found in the plastid. The protein localises to the chloroplast stroma. In terms of biological role, binds specific group II introns in chloroplasts and facilitates their splicing. Acts on both subgroup IIA and subgroup IIB introns. The substrates of the subgroup IIB also require the CRM domain proteins CAF1 or CAF2, with a simultaneous binding of CFM2 and CAF1 or CAF2. Can bind to and promote the splicing of the single group I intron in chloroplast tRNA transcript of trnL-UAA gene. The chain is CRM-domain containing factor CFM2, chloroplastic from Arabidopsis thaliana (Mouse-ear cress).